The chain runs to 595 residues: TNF receptor-associated factor family protein DDB_G0272348 (595 aa).

A disordered region spans residues Ser-14–Asn-64. Over residues Asn-17 to Asn-64 the composition is skewed to low complexity. Residues Cys-87–Gly-134 form an RING-type; degenerate zinc finger. 2 consecutive TRAF-type zinc fingers follow at residues Glu-189–Glu-253 and Ser-254–Ser-311. Residues Leu-348–Gln-410 adopt a coiled-coil conformation. The segment covering Gln-409–Asn-440 has biased composition (low complexity). Residues Gln-409–Gly-450 form a disordered region. Residues Val-441–Gly-450 are compositionally biased toward polar residues. Positions Val-456–Ile-584 constitute an MATH domain.

It belongs to the TNF receptor-associated factor family. A subfamily.

It is found in the cytoplasm. Probable adapter protein and signal transducer that links members of the tumor necrosis factor receptor family to different signaling pathways by association with the receptor cytoplasmic domain and kinases. This chain is TNF receptor-associated factor family protein DDB_G0272348, found in Dictyostelium discoideum (Social amoeba).